The chain runs to 180 residues: MAEKRNIFLVGPMGAGKSTIGRQLAQQLNMDFIDSDAVIEERTGADISWIFDLEGEDGFRKREERIINELTQMQGIVLSTGGGAVLSKENRNYLSARGIVIYLETTVEKQFQRTQRDKKRPLLQDAENPRQVLEDLAKIRNPLYEEIADITLPTDEQNAKIMVNQIVDLIDNMNGLNGAL.

ATP is bound at residue 14–19 (GAGKST). A Mg(2+)-binding site is contributed by serine 18. 3 residues coordinate substrate: aspartate 36, arginine 60, and glycine 82. Arginine 120 is an ATP binding site. Arginine 140 is a substrate binding site. Position 157 (glutamine 157) interacts with ATP.

It belongs to the shikimate kinase family. Monomer. The cofactor is Mg(2+).

The protein resides in the cytoplasm. It catalyses the reaction shikimate + ATP = 3-phosphoshikimate + ADP + H(+). Its pathway is metabolic intermediate biosynthesis; chorismate biosynthesis; chorismate from D-erythrose 4-phosphate and phosphoenolpyruvate: step 5/7. Its function is as follows. Catalyzes the specific phosphorylation of the 3-hydroxyl group of shikimic acid using ATP as a cosubstrate. The sequence is that of Shikimate kinase from Haemophilus influenzae (strain PittGG).